Here is a 1492-residue protein sequence, read N- to C-terminus: DNA-directed RNA polymerase subunit beta' (1492 aa).

Zn(2+)-binding residues include C67, C69, C82, and C85. Mg(2+) is bound by residues D499, D501, and D503. The Zn(2+) site is built by C867, C943, C950, and C953.

Belongs to the RNA polymerase beta' chain family. In terms of assembly, the RNAP catalytic core consists of 2 alpha, 1 beta, 1 beta' and 1 omega subunit. When a sigma factor is associated with the core the holoenzyme is formed, which can initiate transcription. Mg(2+) serves as cofactor. It depends on Zn(2+) as a cofactor.

It carries out the reaction RNA(n) + a ribonucleoside 5'-triphosphate = RNA(n+1) + diphosphate. In terms of biological role, DNA-dependent RNA polymerase catalyzes the transcription of DNA into RNA using the four ribonucleoside triphosphates as substrates. The protein is DNA-directed RNA polymerase subunit beta' of Chlorobium phaeobacteroides (strain DSM 266 / SMG 266 / 2430).